A 197-amino-acid polypeptide reads, in one-letter code: Cell division protein SepF (197 aa).

Residues E15 to S89 are disordered. Positions P22 to R42 are enriched in basic and acidic residues. Polar residues predominate over residues N43–T73. A compositionally biased stretch (low complexity) spans R80 to S89.

This sequence belongs to the SepF family. As to quaternary structure, homodimer. Interacts with FtsZ.

It is found in the cytoplasm. In terms of biological role, cell division protein that is part of the divisome complex and is recruited early to the Z-ring. Probably stimulates Z-ring formation, perhaps through the cross-linking of FtsZ protofilaments. Its function overlaps with FtsA. This is Cell division protein SepF from Staphylococcus epidermidis (strain ATCC 35984 / DSM 28319 / BCRC 17069 / CCUG 31568 / BM 3577 / RP62A).